Here is a 229-residue protein sequence, read N- to C-terminus: Ribonuclease HII (229 aa).

One can recognise an RNase H type-2 domain in the interval 42–229 (TRIAGVDEVG…KPVHKILYQE (188 aa)). A divalent metal cation contacts are provided by aspartate 48, glutamate 49, and aspartate 139.

The protein belongs to the RNase HII family. The cofactor is Mn(2+). Mg(2+) serves as cofactor.

It localises to the cytoplasm. It carries out the reaction Endonucleolytic cleavage to 5'-phosphomonoester.. Functionally, endonuclease that specifically degrades the RNA of RNA-DNA hybrids. This chain is Ribonuclease HII, found in Ruegeria sp. (strain TM1040) (Silicibacter sp.).